The primary structure comprises 375 residues: Erythronate-4-phosphate dehydrogenase (375 aa).

Serine 45 and threonine 67 together coordinate substrate. Residue aspartate 147 participates in NAD(+) binding. Arginine 209 is a catalytic residue. Aspartate 233 is a binding site for NAD(+). Glutamate 238 is an active-site residue. Histidine 255 serves as the catalytic Proton donor. Glycine 258 is an NAD(+) binding site. Tyrosine 259 lines the substrate pocket.

The protein belongs to the D-isomer specific 2-hydroxyacid dehydrogenase family. PdxB subfamily. Homodimer.

The protein localises to the cytoplasm. It carries out the reaction 4-phospho-D-erythronate + NAD(+) = (R)-3-hydroxy-2-oxo-4-phosphooxybutanoate + NADH + H(+). It participates in cofactor biosynthesis; pyridoxine 5'-phosphate biosynthesis; pyridoxine 5'-phosphate from D-erythrose 4-phosphate: step 2/5. In terms of biological role, catalyzes the oxidation of erythronate-4-phosphate to 3-hydroxy-2-oxo-4-phosphonooxybutanoate. This is Erythronate-4-phosphate dehydrogenase from Shewanella amazonensis (strain ATCC BAA-1098 / SB2B).